Consider the following 343-residue polypeptide: Putative KilA-N domain-containing protein R904 (343 aa).

A KilA-N domain is found at 51 to 157 (EFSWGNYLNL…IKASVIINDY (107 aa)). Residues 159–279 (AKQMFKEHEK…NAVKEYKELY (121 aa)) are a coiled coil.

The polypeptide is Putative KilA-N domain-containing protein R904 (Acanthamoeba polyphaga mimivirus (APMV)).